The following is a 401-amino-acid chain: Dihydrolipoyllysine-residue succinyltransferase component of 2-oxoglutarate dehydrogenase complex (401 aa).

A Lipoyl-binding domain is found at 2–77 (SVKIIVPSLG…AVGEEIGEIN (76 aa)). The residue at position 43 (Lys-43) is an N6-lipoyllysine. Positions 115–152 (ILAPSVQKLVTENKLDPNNIKGTGRDGRITKGDVLETI) constitute a Peripheral subunit-binding (PSBD) domain. Catalysis depends on residues His-372 and Asp-376.

It belongs to the 2-oxoacid dehydrogenase family. In terms of assembly, forms a 24-polypeptide structural core with octahedral symmetry. Part of the 2-oxoglutarate dehydrogenase (OGDH) complex composed of E1 (2-oxoglutarate dehydrogenase), E2 (dihydrolipoamide succinyltransferase) and E3 (dihydrolipoamide dehydrogenase); the complex contains multiple copies of the three enzymatic components (E1, E2 and E3). It depends on (R)-lipoate as a cofactor.

It carries out the reaction N(6)-[(R)-dihydrolipoyl]-L-lysyl-[protein] + succinyl-CoA = N(6)-[(R)-S(8)-succinyldihydrolipoyl]-L-lysyl-[protein] + CoA. It functions in the pathway amino-acid degradation; L-lysine degradation via saccharopine pathway; glutaryl-CoA from L-lysine: step 6/6. Its function is as follows. E2 component of the 2-oxoglutarate dehydrogenase (OGDH) complex which catalyzes the second step in the conversion of 2-oxoglutarate to succinyl-CoA and CO(2). This chain is Dihydrolipoyllysine-residue succinyltransferase component of 2-oxoglutarate dehydrogenase complex (sucB), found in Rickettsia felis (strain ATCC VR-1525 / URRWXCal2) (Rickettsia azadi).